A 482-amino-acid polypeptide reads, in one-letter code: Anaerobic nitric oxide reductase flavorubredoxin (482 aa).

Residues 30–210 (LRGSSYNSYL…PFSRLVTPKI (181 aa)) form a zinc metallo-hydrolase region. The Fe cation site is built by histidine 79, glutamate 81, aspartate 83, histidine 147, aspartate 166, and histidine 227. In terms of domain architecture, Flavodoxin-like spans 254 to 393 (ITLFYDTMSN…ICRQHGREIA (140 aa)). FMN is bound by residues 260-264 (TMSNN) and 342-369 (AFGSHGWSGGAVDRLSTRLQDAGFEMSM). The Rubredoxin-like domain occupies 426 to 477 (GPCMQCSVCQWVYDPALGEPLQDVAPGTPWSDVPDNFLCPECSLGKDVFDVL). Fe cation-binding residues include cysteine 431, cysteine 434, cysteine 464, and cysteine 467.

The protein in the N-terminal section; belongs to the zinc metallo-hydrolase group 3 family. As to quaternary structure, homotetramer. It depends on Fe cation as a cofactor. FMN is required as a cofactor.

It is found in the cytoplasm. It functions in the pathway nitrogen metabolism; nitric oxide reduction. Its function is as follows. Anaerobic nitric oxide reductase; uses NADH to detoxify nitric oxide (NO), protecting several 4Fe-4S NO-sensitive enzymes. Has at least 2 reductase partners, only one of which (NorW, flavorubredoxin reductase) has been identified. NO probably binds to the di-iron center; electrons enter from the NorW at rubredoxin and are transferred sequentially to the FMN center and the di-iron center. Also able to function as an aerobic oxygen reductase. This chain is Anaerobic nitric oxide reductase flavorubredoxin, found in Enterobacter sp. (strain 638).